We begin with the raw amino-acid sequence, 325 residues long: Isoaspartyl peptidase/L-asparaginase (325 aa).

Thr193 serves as the catalytic Nucleophile. Substrate is bound by residues 221 to 224 (RIGD) and 243 to 246 (TGKG).

This sequence belongs to the Ntn-hydrolase family. As to quaternary structure, heterotetramer of two alpha and two beta chains arranged as a dimer of alpha/beta heterodimers. Post-translationally, cleaved into an alpha and beta chain by autocatalysis; this activates the enzyme. The N-terminal residue of the beta subunit is responsible for the nucleophile hydrolase activity. Developing seeds.

The catalysed reaction is Cleavage of a beta-linked Asp residue from the N-terminus of a polypeptide.. Acts in asparagine catabolism but also in the final steps of protein degradation via hydrolysis of a range of isoaspartyl dipeptides. The chain is Isoaspartyl peptidase/L-asparaginase from Lupinus angustifolius (Narrow-leaved blue lupine).